A 230-amino-acid chain; its full sequence is Ribonuclease HII (230 aa).

The 190-residue stretch at 28–217 (FRIAGIDEAG…VKEHLPSQPD (190 aa)) folds into the RNase H type-2 domain. Asp34, Glu35, and Asp126 together coordinate a divalent metal cation. The segment at 209-230 (KEHLPSQPDSDTAGPSTGLFSF) is disordered. Over residues 215 to 230 (QPDSDTAGPSTGLFSF) the composition is skewed to polar residues.

It belongs to the RNase HII family. It depends on Mn(2+) as a cofactor. The cofactor is Mg(2+).

Its subcellular location is the cytoplasm. The catalysed reaction is Endonucleolytic cleavage to 5'-phosphomonoester.. In terms of biological role, endonuclease that specifically degrades the RNA of RNA-DNA hybrids. In Citrifermentans bemidjiense (strain ATCC BAA-1014 / DSM 16622 / JCM 12645 / Bem) (Geobacter bemidjiensis), this protein is Ribonuclease HII.